The chain runs to 741 residues: Ethylene receptor 2 (741 aa).

A run of 3 helical transmembrane segments spans residues 23 to 43 (ISDF…IYFV), 53 to 73 (WVLV…LINL), and 92 to 112 (IMTA…IPDL). 2 residues coordinate Cu cation: cysteine 65 and histidine 69. One can recognise a GAF domain in the interval 158 to 307 (DRHTILKTTL…VVADQVAVAL (150 aa)). Positions 350 to 589 (VMNHEMRTPM…TFVVKLGIPE (240 aa)) constitute a Histidine kinase domain. Position 353 is a phosphohistidine; by autocatalysis (histidine 353). Residues 615 to 732 (KVLLLDDNGV…KMRNVLSNLL (118 aa)) form the Response regulatory domain. Aspartate 663 carries the 4-aspartylphosphate modification.

It belongs to the ethylene receptor family. In terms of assembly, homodimer; disulfide-linked. Cu cation serves as cofactor. In terms of processing, activation probably requires a transfer of a phosphate group between a His in the transmitter domain and an Asp of the receiver domain.

The protein resides in the endoplasmic reticulum membrane. The catalysed reaction is ATP + protein L-histidine = ADP + protein N-phospho-L-histidine.. In terms of biological role, may act early in the ethylene signal transduction pathway, possibly as an ethylene receptor, or as a regulator of the pathway. This chain is Ethylene receptor 2 (ETR2), found in Pelargonium hortorum (Common geranium).